Reading from the N-terminus, the 137-residue chain is 15.7 kDa heat shock protein, peroxisomal (137 aa).

A sHSP domain is found at 15-134 (QEWSRSTALI…SSKVRNVNIT (120 aa)). The short motif at 135–137 (SKL) is the Microbody targeting signal element.

Belongs to the small heat shock protein (HSP20) family. May form oligomeric structures.

The protein localises to the peroxisome. Possesses chaperone activity. This chain is 15.7 kDa heat shock protein, peroxisomal (HSP15.7), found in Arabidopsis thaliana (Mouse-ear cress).